Consider the following 289-residue polypeptide: ATP synthase gamma chain (289 aa).

The protein belongs to the ATPase gamma chain family. In terms of assembly, F-type ATPases have 2 components, CF(1) - the catalytic core - and CF(0) - the membrane proton channel. CF(1) has five subunits: alpha(3), beta(3), gamma(1), delta(1), epsilon(1). CF(0) has three main subunits: a, b and c.

The protein resides in the cell inner membrane. Its function is as follows. Produces ATP from ADP in the presence of a proton gradient across the membrane. The gamma chain is believed to be important in regulating ATPase activity and the flow of protons through the CF(0) complex. The polypeptide is ATP synthase gamma chain (Actinobacillus succinogenes (strain ATCC 55618 / DSM 22257 / CCUG 43843 / 130Z)).